A 134-amino-acid chain; its full sequence is Small ribosomal subunit protein uS12 (134 aa).

The disordered stretch occupies residues 1-27; that stretch reads MPTIQQLVRKGRESFADKSKSPALNSC. The segment covering 10 to 20 has biased composition (basic and acidic residues); that stretch reads KGRESFADKSK. D89 carries the 3-methylthioaspartic acid modification. The segment at 103–134 is disordered; it reads DTAGVNGRTQRRSKYGAKRPKPGQAPAAKGKK. Basic residues predominate over residues 111 to 123; sequence TQRRSKYGAKRPK. The segment covering 124 to 134 has biased composition (low complexity); sequence PGQAPAAKGKK.

Belongs to the universal ribosomal protein uS12 family. In terms of assembly, part of the 30S ribosomal subunit. Contacts proteins S8 and S17. May interact with IF1 in the 30S initiation complex.

With S4 and S5 plays an important role in translational accuracy. Its function is as follows. Interacts with and stabilizes bases of the 16S rRNA that are involved in tRNA selection in the A site and with the mRNA backbone. Located at the interface of the 30S and 50S subunits, it traverses the body of the 30S subunit contacting proteins on the other side and probably holding the rRNA structure together. The combined cluster of proteins S8, S12 and S17 appears to hold together the shoulder and platform of the 30S subunit. This chain is Small ribosomal subunit protein uS12, found in Porphyromonas gingivalis (strain ATCC 33277 / DSM 20709 / CIP 103683 / JCM 12257 / NCTC 11834 / 2561).